The following is a 978-amino-acid chain: Serine/threonine-protein kinase PLK4 (978 aa).

One can recognise a Protein kinase domain in the interval 13 to 266 (FQVLDLLGKG…LSGILDHPFI (254 aa)). ATP is bound by residues 19–27 (LGKGGFACV) and lysine 42. Aspartate 137 serves as the catalytic Proton acceptor. Composition is skewed to polar residues over residues 271-282 (LNTKYSSPTRQH) and 291-304 (SLDS…TIST). Disordered stretches follow at residues 271–381 (LNTK…TRTS), 489–578 (IEQP…AERL), 788–818 (AWKN…SSPS), and 838–869 (AQTT…QPIP). Positions 324-335 (RTSDIWPRDPKH) are enriched in basic and acidic residues. 2 stretches are compositionally biased toward polar residues: residues 351 to 362 (TENVTTGSSSHV) and 371 to 381 (AQYSGLKTRTS). Basic and acidic residues-rich tracts occupy residues 518–527 (GSDSVSKDFD) and 536–566 (ESRR…DKSL). A Cryptic POLO box 1 (CPB1) domain is found at 565–678 (SLGELTEPLN…AKFVQLVRKL (114 aa)). The 114-residue stretch at 679–792 (TPKVTLYSKH…GRRPPAWKNS (114 aa)) folds into the Cryptic POLO box 2 (CPB2) domain. The span at 801–818 (QQGCSNGQSQPVLPSSPS) shows a compositional bias: polar residues. A compositionally biased stretch (basic residues) spans 848–862 (KSRKTSPSKTSRHKQ). The region spanning 895 to 973 (HVCKMAFVDG…LPAVIKTLAT (79 aa)) is the POLO box domain.

The protein belongs to the protein kinase superfamily. Ser/Thr protein kinase family. CDC5/Polo subfamily. In terms of assembly, homodimer. Ubiquitinated; leading to its degradation by the proteasome.

It localises to the cytoplasm. It is found in the cytoskeleton. The protein localises to the microtubule organizing center. The protein resides in the centrosome. Its subcellular location is the centriole. It carries out the reaction L-seryl-[protein] + ATP = O-phospho-L-seryl-[protein] + ADP + H(+). The catalysed reaction is L-threonyl-[protein] + ATP = O-phospho-L-threonyl-[protein] + ADP + H(+). Serine/threonine-protein kinase that plays a central role in centriole duplication. Able to trigger procentriole formation on the surface of the mother centriole cylinder, leading to the recruitment of centriole biogenesis proteins. When overexpressed, it is able to induce centrosome amplification through the simultaneous generation of multiple procentrioles adjoining each parental centriole during S phase. This chain is Serine/threonine-protein kinase PLK4, found in Nematostella vectensis (Starlet sea anemone).